The sequence spans 842 residues: Putative G-type lectin S-receptor-like serine/threonine-protein kinase At1g61610 (842 aa).

Positions 1–22 are cleaved as a signal peptide; it reads MAGFNRNLTLVTTLLIFHQLCS. 9 N-linked (GlcNAc...) asparagine glycosylation sites follow: Asn7, Asn23, Asn35, Asn60, Asn110, Asn123, Asn304, Asn351, and Asn380. At 23-443 the chain is on the extracellular side; sequence NVSCSTSNSF…KLGGGKENST (421 aa). The 122-residue stretch at 29 to 150 folds into the Bulb-type lectin domain; sequence SNSFTRNHTI…SDRRKWYWES (122 aa). In terms of domain architecture, EGF-like spans 292–331; it reads PSTECEKYNRCGNYSVCDDSKEFDSGKCSCIDGFEPVHQD. Intrachain disulfides connect Cys296/Cys308 and Cys302/Cys319. The region spanning 350 to 431 is the PAN domain; that stretch reads CNQSLVAGQE…GGNSINIRLA (82 aa). 2 cysteine pairs are disulfide-bonded: Cys385–Cys406 and Cys389–Cys395. The N-linked (GlcNAc...) asparagine glycan is linked to Asn441. The chain crosses the membrane as a helical span at residues 444–464; sequence LWIIVFSVIGAFLLGLCIWIL. Topologically, residues 465-842 are cytoplasmic; the sequence is WKFKKSLKAF…DVTFTTIVGR (378 aa). A Protein kinase domain is found at 525-814; the sequence is FAEENKLGQG…PRQPTFHSFL (290 aa). Residues 531–539 and Lys553 each bind ATP; that span reads LGQGGFGTV. Position 559 is a phosphoserine (Ser559). Positions 614–631 are caM-binding; it reads SKQGSLDWRKRWEVIGGI. The Proton acceptor role is filled by Asp650. A phosphoserine mark is found at Ser654 and Ser667. A Phosphothreonine modification is found at Thr684. Ser728 and Ser830 each carry phosphoserine. Residue Thr837 is modified to Phosphothreonine.

The protein belongs to the protein kinase superfamily. Ser/Thr protein kinase family.

The protein localises to the cell membrane. It carries out the reaction L-seryl-[protein] + ATP = O-phospho-L-seryl-[protein] + ADP + H(+). The enzyme catalyses L-threonyl-[protein] + ATP = O-phospho-L-threonyl-[protein] + ADP + H(+). The chain is Putative G-type lectin S-receptor-like serine/threonine-protein kinase At1g61610 from Arabidopsis thaliana (Mouse-ear cress).